Here is a 160-residue protein sequence, read N- to C-terminus: Ureidoglycolate lyase (160 aa).

The protein belongs to the ureidoglycolate lyase family. Homodimer. The cofactor is Ni(2+).

The catalysed reaction is (S)-ureidoglycolate = urea + glyoxylate. It functions in the pathway nitrogen metabolism; (S)-allantoin degradation. Catalyzes the catabolism of the allantoin degradation intermediate (S)-ureidoglycolate, generating urea and glyoxylate. Involved in the anaerobic utilization of allantoin as sole nitrogen source. Reinforces the induction of genes involved in the degradation of allantoin and glyoxylate by producing glyoxylate. The protein is Ureidoglycolate lyase of Shigella flexneri serotype 5b (strain 8401).